A 449-amino-acid chain; its full sequence is MGLWDVDKIEYVGRAKGPKEDFAFHYYDADKVVAGKKMKDWLRFGVAWWHTFNQELVDPFGTGTAHRPYYKYTDPMDQALAKVDYAFELFQKLGVEYFCFHDRDIAPEGDTLRETNANLDKVVDKIEENMKSTGVKLLWNTSSLFTNPRFVSGAATSPFADIYAYAGGQLKKSLEIGKRLGAENYVFWGGREGYENLWNTEMKRETDHIAKFFHMCADYAKEIGFEAQFLIEPKPKEPTLHQYDFDAATAIEFLRNHDLTDVFKLNLEGNHANLAGHTYQHEIRVARESGFLGSLDANQGDKLIGWDMDEFPTDLYETVAVMWEVLQAGSIGPHGGLNFDAKPRRTSFYEEDLFRSHIAGMDTYAAGLLVADKMNQDGFIQDLMAERYSSYDSGIGKDIDEGNVTLADLEAYSLDKPQSELIAATKSDHLESVKATINNYIIDALSEVE.

Catalysis depends on residues H101 and D104. Residues E232, E268, H271, D296, D307, D309, and D340 each contribute to the Mg(2+) site.

This sequence belongs to the xylose isomerase family. As to quaternary structure, homotetramer. Mg(2+) serves as cofactor.

It localises to the cytoplasm. The catalysed reaction is alpha-D-xylose = alpha-D-xylulofuranose. The polypeptide is Xylose isomerase (Bifidobacterium longum (strain DJO10A)).